The chain runs to 254 residues: UPF0246 protein FTF1693c (254 aa).

Belongs to the UPF0246 family.

The polypeptide is UPF0246 protein FTF1693c (Francisella tularensis subsp. tularensis (strain FSC 198)).